A 473-amino-acid polypeptide reads, in one-letter code: Spliceosome-associated protein CWC27 homolog (473 aa).

Position 2 is an N-acetylserine (Ser2). A PPIase cyclophilin-type domain is found at 11 to 166 (TNGKVLLKTT…NSHKIRSCEV (156 aa)). The span at 178–193 (EIKKPKKEKPEEEVKK) shows a compositional bias: basic and acidic residues. Disordered regions lie at residues 178-197 (EIKK…LKPK), 203-383 (SLLS…TSRE), and 401-473 (IAET…KERR). Residues 206–230 (SFGEEAEEEEEEVNRVSQSMKGKSK) adopt a coiled-coil conformation. Over residues 231-241 (SSHDLLKDDPH) the composition is skewed to basic and acidic residues. A Cell attachment site motif is present at residues 252 to 254 (RGD). The span at 256 to 266 (AEDSDDDGEYE) shows a compositional bias: acidic residues. 2 stretches are compositionally biased toward basic and acidic residues: residues 267–348 (GAEH…KRSE) and 360–372 (EYRR…EALR). A coiled-coil region spans residues 311–378 (VSRSEELRKE…EALRKQQAKT (68 aa)). Ser347 is modified (phosphoserine). Residues 405 to 419 (PENDISETEVEDDEG) are compositionally biased toward acidic residues. Basic and acidic residues-rich tracts occupy residues 426-438 (QFED…KDAS) and 458-473 (RREE…KERR).

Belongs to the cyclophilin-type PPIase family. As to quaternary structure, part of the activated spliceosome B/catalytic step 1 spliceosome, one of the forms of the spliceosome which has a well-formed active site but still cannot catalyze the branching reaction and is composed at least of 52 proteins, the U2, U5 and U6 snRNAs and the pre-mRNA. Recruited during early steps of activated spliceosome B maturation, it is probably one of the first proteins released from this complex as he matures to the spliceosome C complex. Component of the minor spliceosome, which splices U12-type introns.

It is found in the nucleus. Its function is as follows. As part of the spliceosome, plays a role in pre-mRNA splicing. Probable inactive PPIase with no peptidyl-prolyl cis-trans isomerase activity. As a component of the minor spliceosome, involved in the splicing of U12-type introns in pre-mRNAs. The sequence is that of Spliceosome-associated protein CWC27 homolog from Bos taurus (Bovine).